We begin with the raw amino-acid sequence, 257 residues long: Phycoerythrobilin:ferredoxin oxidoreductase (257 aa).

It belongs to the HY2 family.

It catalyses the reaction (3Z)-phycoerythrobilin + oxidized 2[4Fe-4S]-[ferredoxin] = 15,16-dihydrobiliverdin + reduced 2[4Fe-4S]-[ferredoxin] + 2 H(+). In terms of biological role, catalyzes the two-electron reduction of the C2 and C3(1) diene system of 15,16-dihydrobiliverdin. The polypeptide is Phycoerythrobilin:ferredoxin oxidoreductase (Prochlorococcus marinus (strain MIT 9303)).